The chain runs to 416 residues: Ribulose bisphosphate carboxylase large chain (416 aa).

The substrate site is built by Asn100 and Thr150. Lys152 (proton acceptor) is an active-site residue. Lys154 is a binding site for substrate. Mg(2+)-binding residues include Lys178, Asp180, and Glu181. Lys178 is modified (N6-carboxylysine). His271 serves as the catalytic Proton acceptor. Arg272, His304, and Ser356 together coordinate substrate.

This sequence belongs to the RuBisCO large chain family. Type I subfamily. Heterohexadecamer of 8 large chains and 8 small chains; disulfide-linked. The disulfide link is formed within the large subunit homodimers. Requires Mg(2+) as cofactor. The disulfide bond which can form in the large chain dimeric partners within the hexadecamer appears to be associated with oxidative stress and protein turnover.

It localises to the plastid. Its subcellular location is the chloroplast. It carries out the reaction 2 (2R)-3-phosphoglycerate + 2 H(+) = D-ribulose 1,5-bisphosphate + CO2 + H2O. It catalyses the reaction D-ribulose 1,5-bisphosphate + O2 = 2-phosphoglycolate + (2R)-3-phosphoglycerate + 2 H(+). Its function is as follows. RuBisCO catalyzes two reactions: the carboxylation of D-ribulose 1,5-bisphosphate, the primary event in carbon dioxide fixation, as well as the oxidative fragmentation of the pentose substrate in the photorespiration process. Both reactions occur simultaneously and in competition at the same active site. The chain is Ribulose bisphosphate carboxylase large chain (rbcL) from Cheiropleuria bicuspis (Fern).